A 210-amino-acid polypeptide reads, in one-letter code: Guanylate kinase (210 aa).

The 181-residue stretch at 6 to 186 folds into the Guanylate kinase-like domain; sequence GVILVLSSPS…TADRISNILR (181 aa). 13-20 provides a ligand contact to ATP; the sequence is SPSGCGKT.

The protein belongs to the guanylate kinase family.

It localises to the cytoplasm. The catalysed reaction is GMP + ATP = GDP + ADP. Essential for recycling GMP and indirectly, cGMP. The sequence is that of Guanylate kinase from Anaplasma phagocytophilum (strain HZ).